Here is a 373-residue protein sequence, read N- to C-terminus: LIM domain-binding protein 1 (373 aa).

Disordered stretches follow at residues 248-297 (PPAE…LSSQ) and 329-373 (DAAN…QASQ). The span at 266–282 (SGGSTMSSGGGNTNNSN) shows a compositional bias: low complexity. Positions 288–297 (PASTFALSSQ) are enriched in polar residues. One can recognise an LIM interaction domain (LID) domain in the interval 298–337 (DVMVVGEPTLMGGEFGDEDERLITRLENTQFDAANGIDDE).

The protein belongs to the LDB family. Forms homodimers and heterodimers. Interacts with and activates lhx1/lim1. The stoichiometry of lhx1/lim1 and ldb1 is important for their function and an excess of ldb1 can inhibit lhx1/lim1 function. When bound to lhx1/lim1, escapes degradation by rnf12. Interacts with the N-terminal region of rnf12. Post-translationally, undergoes rnf12-mediated ubiquitin-proteasome-dependent degradation.

The protein resides in the nucleus. Functionally, binds to the LIM domain of a wide variety of LIM domain-containing transcription factors. Acts as a coactivator together with otx2 to stimulate lhx1/lim1-mediated activation of the gsc promoter in the Spemann organizer. Acts synergistically with lhx1/lim1 and ssbp in axis formation. This Xenopus tropicalis (Western clawed frog) protein is LIM domain-binding protein 1.